Reading from the N-terminus, the 671-residue chain is MEPIEQQLTELRTTLRHHEYLYHVMDAPEIPDAEYDRLMRELRELEAQRPDLITPDSPTQRVGAAPLTAFNQIRHEVPMLSLDNVFDEESFLAFNKRVQDRLKSTENVIWCCELKLDGLAVSILYENGVLVSAATRGDGTTGEDITSNVRTIRAIPLKLHGDNIPARLEVRGEVFLPQAGFEKINEDARRTGGKVFANPRNAAAGSLRQLDPRITAKRPLTFFCYGVGILEGGELPDTHLGRLLQFKAWGLPVSDRVTLCDSPQAVLDFYRNVEKDRPTLGFDIDGVVIKVNSLALQEQLGFVARAPRWAVAFKFPAQEQMTFVRDVEFQVGRTGAITPVARLEPVQVAGVLVSNATLHNADEIERLGLRIGDKVVIRRAGDVIPQVVNVVLSERPEETRPIVFPTHCPVCGSDVERVEGEAVTRCTGGLICGAQRKESLKHFVSRRAMDVDGMGDKIIDQLVEREYVHTPADLFRLTAGKLTGLDRMGPKSAQNVVNALEKAKATTFARFLYALGIREVGEATAAGLAAYFGTLEALQAATIDELQKVPDVGIVVATHVFNFFAEESNRDVIVQLLAEGVHWPAPVVINVQEIDSPFAGKTVVLTGSLSQMSRDDAKARLVALGAKVAGSVSKKTDLVIAGEAAGSKLAKAQELGITVIDEAEMIRLLGA.

Residues 32 to 36 (DAEYD), 81 to 82 (SL), and Glu-113 each bind NAD(+). Lys-115 acts as the N6-AMP-lysine intermediate in catalysis. Arg-136, Glu-173, Lys-290, and Lys-314 together coordinate NAD(+). Residues Cys-408, Cys-411, Cys-426, and Cys-432 each contribute to the Zn(2+) site. Positions 593-671 (EIDSPFAGKT…EAEMIRLLGA (79 aa)) constitute a BRCT domain.

This sequence belongs to the NAD-dependent DNA ligase family. LigA subfamily. Requires Mg(2+) as cofactor. The cofactor is Mn(2+).

It catalyses the reaction NAD(+) + (deoxyribonucleotide)n-3'-hydroxyl + 5'-phospho-(deoxyribonucleotide)m = (deoxyribonucleotide)n+m + AMP + beta-nicotinamide D-nucleotide.. Its function is as follows. DNA ligase that catalyzes the formation of phosphodiester linkages between 5'-phosphoryl and 3'-hydroxyl groups in double-stranded DNA using NAD as a coenzyme and as the energy source for the reaction. It is essential for DNA replication and repair of damaged DNA. This is DNA ligase from Salmonella paratyphi C (strain RKS4594).